A 206-amino-acid polypeptide reads, in one-letter code: Small ribosomal subunit protein uS4 (206 aa).

The 61-residue stretch at 96-156 (GRLDNVVYRM…EKAKKQSRVK (61 aa)) folds into the S4 RNA-binding domain.

This sequence belongs to the universal ribosomal protein uS4 family. In terms of assembly, part of the 30S ribosomal subunit. Contacts protein S5. The interaction surface between S4 and S5 is involved in control of translational fidelity.

Functionally, one of the primary rRNA binding proteins, it binds directly to 16S rRNA where it nucleates assembly of the body of the 30S subunit. In terms of biological role, with S5 and S12 plays an important role in translational accuracy. The chain is Small ribosomal subunit protein uS4 from Pectobacterium atrosepticum (strain SCRI 1043 / ATCC BAA-672) (Erwinia carotovora subsp. atroseptica).